The following is a 435-amino-acid chain: Tryptophan--tRNA ligase (435 aa).

Residues 10-12 (TTS) and 18-19 (GN) each bind ATP. A 'HIGH' region motif is present at residues 11–19 (TSGTPHLGN). Residue aspartate 143 participates in L-tryptophan binding. Residues 155-157 (GRD), leucine 195, and 202-206 (KMSKS) contribute to the ATP site. Positions 202–206 (KMSKS) match the 'KMSKS' region motif.

The protein belongs to the class-I aminoacyl-tRNA synthetase family. Homodimer.

It localises to the cytoplasm. The enzyme catalyses tRNA(Trp) + L-tryptophan + ATP = L-tryptophyl-tRNA(Trp) + AMP + diphosphate + H(+). Its function is as follows. Catalyzes the attachment of tryptophan to tRNA(Trp). The sequence is that of Tryptophan--tRNA ligase from Xylella fastidiosa (strain Temecula1 / ATCC 700964).